The sequence spans 356 residues: Tyrosine recombinase XerS (356 aa).

In terms of domain architecture, Core-binding (CB) spans 16 to 121; sequence LMPWYVLEYY…ALSSLYKYLT (106 aa). In terms of domain architecture, Tyr recombinase spans 169-354; that stretch reads GFLTYIDQEH…VNDEQKNALD (186 aa). Catalysis depends on residues arginine 210, lysine 234, histidine 306, arginine 309, and histidine 332. Residue tyrosine 341 is the O-(3'-phospho-DNA)-tyrosine intermediate of the active site.

Belongs to the 'phage' integrase family. XerS subfamily.

It localises to the cytoplasm. Its activity is regulated as follows. FtsK is required for recombination. In terms of biological role, site-specific tyrosine recombinase, which acts by catalyzing the cutting and rejoining of the recombining DNA molecules. Essential to convert dimers of the bacterial chromosome into monomers to permit their segregation at cell division. The sequence is that of Tyrosine recombinase XerS from Streptococcus pneumoniae (strain P1031).